The following is a 294-amino-acid chain: 4-hydroxy-tetrahydrodipicolinate synthase (294 aa).

A pyruvate-binding site is contributed by Thr45. The active-site Proton donor/acceptor is Tyr133. Lys161 acts as the Schiff-base intermediate with substrate in catalysis. Ile203 provides a ligand contact to pyruvate.

The protein belongs to the DapA family. Homotetramer; dimer of dimers.

Its subcellular location is the cytoplasm. The catalysed reaction is L-aspartate 4-semialdehyde + pyruvate = (2S,4S)-4-hydroxy-2,3,4,5-tetrahydrodipicolinate + H2O + H(+). It functions in the pathway amino-acid biosynthesis; L-lysine biosynthesis via DAP pathway; (S)-tetrahydrodipicolinate from L-aspartate: step 3/4. Functionally, catalyzes the condensation of (S)-aspartate-beta-semialdehyde [(S)-ASA] and pyruvate to 4-hydroxy-tetrahydrodipicolinate (HTPA). This chain is 4-hydroxy-tetrahydrodipicolinate synthase, found in Shewanella baltica (strain OS223).